A 274-amino-acid chain; its full sequence is Large ribosomal subunit protein uL2cz (274 aa).

2 disordered regions span residues 1–25 (MAIH…VKSN) and 224–274 (NPVD…RRSK). A compositionally biased stretch (polar residues) spans 7–25 (KTSTPSTRNGTVDSQVKSN).

It belongs to the universal ribosomal protein uL2 family. In terms of assembly, part of the 50S ribosomal subunit.

It localises to the plastid. The protein resides in the chloroplast. The chain is Large ribosomal subunit protein uL2cz (rpl2-A) from Atropa belladonna (Belladonna).